The primary structure comprises 212 residues: Pyridoxine/pyridoxamine 5'-phosphate oxidase (212 aa).

Residues 59–64, 74–75, Lys81, and Gln103 contribute to the FMN site; these read RMVLMK and YS. Lys64 contributes to the substrate binding site. Substrate-binding residues include Tyr121 and Arg125. Residues 138–139 and Trp183 each bind FMN; that span reads QS. Position 189-191 (189-191) interacts with substrate; sequence RLH. Residue Arg193 coordinates FMN.

The protein belongs to the pyridoxamine 5'-phosphate oxidase family. Homodimer. The cofactor is FMN.

The enzyme catalyses pyridoxamine 5'-phosphate + O2 + H2O = pyridoxal 5'-phosphate + H2O2 + NH4(+). It carries out the reaction pyridoxine 5'-phosphate + O2 = pyridoxal 5'-phosphate + H2O2. It participates in cofactor metabolism; pyridoxal 5'-phosphate salvage; pyridoxal 5'-phosphate from pyridoxamine 5'-phosphate: step 1/1. It functions in the pathway cofactor metabolism; pyridoxal 5'-phosphate salvage; pyridoxal 5'-phosphate from pyridoxine 5'-phosphate: step 1/1. Catalyzes the oxidation of either pyridoxine 5'-phosphate (PNP) or pyridoxamine 5'-phosphate (PMP) into pyridoxal 5'-phosphate (PLP). This Rhodopseudomonas palustris (strain TIE-1) protein is Pyridoxine/pyridoxamine 5'-phosphate oxidase.